Here is a 309-residue protein sequence, read N- to C-terminus: Ecotin-like protein 3 (309 aa).

Residues 140–309 (QQELEAPAVS…KSGRDSRRNS (170 aa)) are disordered. The segment covering 156–167 (VRERQNNPEGHA) has biased composition (basic and acidic residues). Over residues 168-180 (HPVVVHSVESPEV) the composition is skewed to low complexity. Basic and acidic residues predominate over residues 181 to 190 (SGHKDGDQPM). Positions 196–205 (LKQSCSNSSR) are enriched in low complexity. Positions 209–221 (HSASGSSPKNTPL) are enriched in polar residues. Positions 261-279 (SDSTSSRKDDQDSGYEKKV) are enriched in basic and acidic residues. Residues 290–299 (SSPKRSASPK) are compositionally biased toward low complexity.

The protein belongs to the protease inhibitor I11 (ecotin) family.

This is Ecotin-like protein 3 from Leishmania braziliensis.